The sequence spans 108 residues: UPF0102 protein Sputcn32_3693 (108 aa).

This sequence belongs to the UPF0102 family.

In Shewanella putrefaciens (strain CN-32 / ATCC BAA-453), this protein is UPF0102 protein Sputcn32_3693.